The following is a 207-amino-acid chain: MSDAPLCAEGLECIRGDRLLFSGLNLTLSPGQLLQVEGANGAGKTSLLRVLAGLSRPAEGEVRWRGLDIQHHRASYFTEMVYMGHAPGLKAELSPLENLRVSVALRGRMADEARIDDALARVGLRGFEDVPARGLSAGQKQRTALCRLLLDPVPLWILDEPFTALDVRGIALVRELLEFHLANGGMALMTSHHALDVRGDCRSLNLS.

The 202-residue stretch at L6–S207 folds into the ABC transporter domain. G38–T45 contacts ATP.

The protein belongs to the ABC transporter superfamily. CcmA exporter (TC 3.A.1.107) family. In terms of assembly, the complex is composed of two ATP-binding proteins (CcmA) and two transmembrane proteins (CcmB).

It is found in the cell inner membrane. The enzyme catalyses heme b(in) + ATP + H2O = heme b(out) + ADP + phosphate + H(+). In terms of biological role, part of the ABC transporter complex CcmAB involved in the biogenesis of c-type cytochromes; once thought to export heme, this seems not to be the case, but its exact role is uncertain. Responsible for energy coupling to the transport system. The polypeptide is Cytochrome c biogenesis ATP-binding export protein CcmA (Methylococcus capsulatus (strain ATCC 33009 / NCIMB 11132 / Bath)).